Reading from the N-terminus, the 660-residue chain is Cysteine-rich receptor-like protein kinase 22 (660 aa).

Residues 1 to 24 form the signal peptide; sequence MKQRSFLSILCFILLAFGVASVSA. 2 consecutive Gnk2-homologous domains span residues 25–128 and 137–250; these read QTCI…NISF and IEPQ…LFTF. The Extracellular segment spans residues 25 to 294; the sequence is QTCIENRKYF…DSRGVSAGIV (270 aa). N-linked (GlcNAc...) asparagine glycans are attached at residues N37, N53, N105, N125, N191, N230, and N256. A compositionally biased stretch (pro residues) spans 264 to 273; sequence KPPMNVPRPP. The interval 264 to 283 is disordered; the sequence is KPPMNVPRPPSVGHGANTTD. N-linked (GlcNAc...) asparagine glycans are attached at residues N280 and N284. A helical transmembrane segment spans residues 295–315; that stretch reads VVITVPAVVIVLILVVLGFFI. The Cytoplasmic portion of the chain corresponds to 316–660; it reads CWRRKSLQRT…DPLSEGLESG (345 aa). A Protein kinase domain is found at 353–632; that stretch reads FSKSNKLGEG…IVSMLTSNTI (280 aa). Residues 359–367 and K381 contribute to the ATP site; that span reads LGEGRFGEV. Y426 is subject to Phosphotyrosine. D478 functions as the Proton acceptor in the catalytic mechanism. S482 is subject to Phosphoserine. At T518 the chain carries Phosphothreonine. Y526 carries the phosphotyrosine modification.

It belongs to the protein kinase superfamily. Ser/Thr protein kinase family. CRK subfamily.

The protein resides in the membrane. It carries out the reaction L-seryl-[protein] + ATP = O-phospho-L-seryl-[protein] + ADP + H(+). The enzyme catalyses L-threonyl-[protein] + ATP = O-phospho-L-threonyl-[protein] + ADP + H(+). In Arabidopsis thaliana (Mouse-ear cress), this protein is Cysteine-rich receptor-like protein kinase 22 (CRK22).